The sequence spans 831 residues: Periplasmic nitrate reductase (831 aa).

The segment at residues 1-31 (MTISRRDLLKAQAAGIAAMAANIPLSSQAPA) is a signal peptide (tat-type signal). A 4Fe-4S Mo/W bis-MGD-type domain is found at 41-97 (ITWSKAPCRFCGTGCGVMVGVKEGRVVATHGDLLAEVNRGLNCVKGYFLSKIMYGAD). Residues cysteine 48, cysteine 51, cysteine 55, and cysteine 83 each coordinate [4Fe-4S] cluster. Residues lysine 85, glutamine 152, asparagine 177, cysteine 181, 214-221 (WGSNMAEM), 245-249 (STFTH), 264-266 (GTD), methionine 375, glutamine 379, asparagine 485, 511-512 (SD), lysine 534, aspartate 561, and 721-730 (TGRVLEHWHS) each bind Mo-bis(molybdopterin guanine dinucleotide). Tryptophan 797 provides a ligand contact to substrate. The Mo-bis(molybdopterin guanine dinucleotide) site is built by asparagine 805 and lysine 822.

It belongs to the prokaryotic molybdopterin-containing oxidoreductase family. NasA/NapA/NarB subfamily. As to quaternary structure, component of the periplasmic nitrate reductase NapAB complex composed of NapA and NapB. [4Fe-4S] cluster is required as a cofactor. It depends on Mo-bis(molybdopterin guanine dinucleotide) as a cofactor. Predicted to be exported by the Tat system. The position of the signal peptide cleavage has not been experimentally proven.

The protein resides in the periplasm. It catalyses the reaction 2 Fe(II)-[cytochrome] + nitrate + 2 H(+) = 2 Fe(III)-[cytochrome] + nitrite + H2O. Catalytic subunit of the periplasmic nitrate reductase complex NapAB. Receives electrons from NapB and catalyzes the reduction of nitrate to nitrite. The protein is Periplasmic nitrate reductase of Paracoccus pantotrophus (Thiosphaera pantotropha).